The sequence spans 879 residues: Prostaglandin F2 receptor negative regulator (879 aa).

The first 21 residues, 1-21 (MGRPAPRPLLLALLSLAVCRG), serve as a signal peptide directing secretion. 2 consecutive Ig-like C2-type domains span residues 22-129 (RVVR…ATVQ) and 149-268 (PSSR…KAVE). Residues 22–832 (RVVRVPAGTL…MDVLNAFKYP (811 aa)) are Extracellular-facing. Disulfide bonds link Cys-43–Cys-119 and Cys-169–Cys-247. Asn-44 is a glycosylation site (N-linked (GlcNAc...) asparagine). The short motif at 89–91 (RGD) is the Cell attachment site element. Thr-271 is modified (phosphothreonine). 4 Ig-like C2-type domains span residues 276–389 (PTAL…WHKV), 406–527 (PEYQ…RNSS), 544–662 (ASED…AWSP), and 688–813 (PIFN…AEIH). A disulfide bond links Cys-299 and Cys-373. N-linked (GlcNAc...) asparagine glycosylation is found at Asn-300, Asn-383, and Asn-413. Positions 424–427 (PTEL) match the Endoplasmic reticulum retention signal motif. Cys-429 and Cys-515 are disulfide-bonded. Asn-525, Asn-600, Asn-618, and Asn-691 each carry an N-linked (GlcNAc...) asparagine glycan. The cysteines at positions 571 and 655 are disulfide-linked. A Cell attachment site motif is present at residues 703–705 (RGD). The cysteines at positions 711 and 793 are disulfide-linked. The chain crosses the membrane as a helical span at residues 833–853 (LLIGVGLSTVIGLLSCLIGYC). Residues 854 to 879 (SSHWCCKKEVRETRRERRRLMSMEMD) are Cytoplasmic-facing.

Interacts with CD9 and CD81. Part of a complex composed of CD9, CD81 and IGSF8. Also seems to interact with CD63, CD82 and CD151. In terms of tissue distribution, reproductive tissues, lung and heart.

The protein localises to the endoplasmic reticulum membrane. It is found in the golgi apparatus. Its subcellular location is the trans-Golgi network membrane. Its function is as follows. Inhibits the binding of prostaglandin F2-alpha (PGF2-alpha) to its specific FP receptor, by decreasing the receptor number rather than the affinity constant. Functional coupling with the prostaglandin F2-alpha receptor seems to occur. In myoblasts, associates with tetraspanins CD9 and CD81 to prevent myotube fusion during muscle regeneration. This is Prostaglandin F2 receptor negative regulator (Ptgfrn) from Rattus norvegicus (Rat).